The following is a 55-amino-acid chain: MYNAPMAQDMSYYEHVQRRHEEKGCLYACIFTALCCFCCYETCECCLDCLCCCCN.

The chain crosses the membrane as a helical span at residues 24-40 (GCLYACIFTALCCFCCY).

The protein belongs to the CYSTM1 family. Expressed in roots and shoots.

Its subcellular location is the cell membrane. It is found in the secreted. The protein resides in the cell wall. Its function is as follows. Confers resistance to heavy metal ions (e.g. cadmium (CdCl(2)) and copper (CuCl(2))) by chelating them at the plasma membrane of root cells, thus stopping their entry and reducing their accumulation. Binds to aluminium (Al). This chain is Protein CADMIUM TOLERANCE 1, found in Oryza sativa subsp. japonica (Rice).